The sequence spans 529 residues: Glycylpeptide N-tetradecanoyltransferase 2 (529 aa).

The disordered stretch occupies residues 1–82 (MAEDSESAAS…QEIKIQQSSK (82 aa)). Residues 15–32 (ELDDQDTCGIDGDNEEET) show a composition bias toward acidic residues. A Phosphoserine modification is found at Ser38. Over residues 46-57 (KKKKKKQKRKKE) the composition is skewed to basic residues. Polar residues predominate over residues 61 to 82 (SGGTKSDSASDSQEIKIQQSSK). Tetradecanoyl-CoA contacts are provided by Trp153, Leu281, Val283, Ser289, Arg291, Val292, and Ala293.

The protein belongs to the NMT family.

It is found in the cytoplasm. Its subcellular location is the membrane. The catalysed reaction is N-terminal glycyl-[protein] + tetradecanoyl-CoA = N-tetradecanoylglycyl-[protein] + CoA + H(+). The enzyme catalyses N-terminal glycyl-L-lysyl-[protein] + tetradecanoyl-CoA = N-terminal glycyl-(N(6)-tetradecanoyl)-L-lysyl-[protein] + CoA + H(+). Adds a myristoyl group to the N-terminal glycine residue of certain cellular and viral proteins. Also able to mediate N-terminal lysine myristoylation of proteins: catalyzes myristoylation of ARF6 on both 'Gly-2' and 'Lys-3'. Lysine myristoylation is required to maintain ARF6 on membranes during the GTPase cycle. The polypeptide is Glycylpeptide N-tetradecanoyltransferase 2 (Nmt2) (Mus musculus (Mouse)).